We begin with the raw amino-acid sequence, 1448 residues long: Protein clueless (1448 aa).

3 disordered regions span residues 1-96 (MALE…HAEK), 110-129 (NANVEKPQEGGAPDAEADGD), and 265-286 (RTRPDSVDCTPPEYVTPGVSDP). Composition is skewed to low complexity over residues 9–26 (NSNATATGDATATATKAS) and 41–66 (NLNPNSNQQNSNQNLVNGNGTAADGP). A compositionally biased stretch (basic residues) spans 68–77 (AKKKGKKNRN). The span at 78–88 (KSPTEPTTEAV) shows a compositional bias: polar residues. The residue at position 270 (serine 270) is a Phosphoserine. Residues 424 to 666 (RAEDAFSSKL…RTFPPDVNFL (243 aa)) enclose the Clu domain. Disordered regions lie at residues 726–773 (SEKS…SGEA), 958–1010 (AVSS…SASD), and 1414–1448 (GEAEDAVSKDIKEQPEAGKQLTNGDKAAATEATSS). Positions 748-769 (GAEKPDDKEKKNEEEEKKERST) are enriched in basic and acidic residues. Basic residues predominate over residues 966-981 (KKRGNGGKHNKHKSSK). The segment covering 986–1007 (QQQQQTTGNQNGSSSGSSNSSS) has biased composition (low complexity). Basic and acidic residues predominate over residues 1419-1429 (AVSKDIKEQPE).

It belongs to the CLU family.

It localises to the cytoplasm. Its function is as follows. mRNA-binding protein involved in proper cytoplasmic distribution of mitochondria. In Drosophila melanogaster (Fruit fly), this protein is Protein clueless.